We begin with the raw amino-acid sequence, 499 residues long: Aspartyl/glutamyl-tRNA(Asn/Gln) amidotransferase subunit B (499 aa).

Belongs to the GatB/GatE family. GatB subfamily. As to quaternary structure, heterotrimer of A, B and C subunits.

It carries out the reaction L-glutamyl-tRNA(Gln) + L-glutamine + ATP + H2O = L-glutaminyl-tRNA(Gln) + L-glutamate + ADP + phosphate + H(+). The catalysed reaction is L-aspartyl-tRNA(Asn) + L-glutamine + ATP + H2O = L-asparaginyl-tRNA(Asn) + L-glutamate + ADP + phosphate + 2 H(+). In terms of biological role, allows the formation of correctly charged Asn-tRNA(Asn) or Gln-tRNA(Gln) through the transamidation of misacylated Asp-tRNA(Asn) or Glu-tRNA(Gln) in organisms which lack either or both of asparaginyl-tRNA or glutaminyl-tRNA synthetases. The reaction takes place in the presence of glutamine and ATP through an activated phospho-Asp-tRNA(Asn) or phospho-Glu-tRNA(Gln). This Mesorhizobium japonicum (strain LMG 29417 / CECT 9101 / MAFF 303099) (Mesorhizobium loti (strain MAFF 303099)) protein is Aspartyl/glutamyl-tRNA(Asn/Gln) amidotransferase subunit B.